The chain runs to 127 residues: Large ribosomal subunit protein bL12 (127 aa).

This sequence belongs to the bacterial ribosomal protein bL12 family. Homodimer. Part of the ribosomal stalk of the 50S ribosomal subunit. Forms a multimeric L10(L12)X complex, where L10 forms an elongated spine to which 2 to 4 L12 dimers bind in a sequential fashion. Binds GTP-bound translation factors.

Its function is as follows. Forms part of the ribosomal stalk which helps the ribosome interact with GTP-bound translation factors. Is thus essential for accurate translation. This chain is Large ribosomal subunit protein bL12, found in Carboxydothermus hydrogenoformans (strain ATCC BAA-161 / DSM 6008 / Z-2901).